We begin with the raw amino-acid sequence, 186 residues long: uncharacterized protein (186 aa).

CBS domains lie at 10-69 (IMKK…KLPP) and 77-133 (ISSG…IIST).

This is an uncharacterized protein from Methanocaldococcus jannaschii (strain ATCC 43067 / DSM 2661 / JAL-1 / JCM 10045 / NBRC 100440) (Methanococcus jannaschii).